A 346-amino-acid polypeptide reads, in one-letter code: NADH-quinone oxidoreductase subunit H (346 aa).

8 helical membrane-spanning segments follow: residues 6–26 (ILFW…ACAY), 76–96 (VMYL…WSVV), 128–148 (ILFL…AGWA), 166–186 (ISYE…SGSL), 198–218 (LWNI…VAMF), 260–280 (ITMS…PFGI), 289–309 (LFGL…FLWV), and 324–344 (LGWK…SIYI).

This sequence belongs to the complex I subunit 1 family. As to quaternary structure, NDH-1 is composed of 14 different subunits. Subunits NuoA, H, J, K, L, M, N constitute the membrane sector of the complex.

The protein resides in the cell inner membrane. It carries out the reaction a quinone + NADH + 5 H(+)(in) = a quinol + NAD(+) + 4 H(+)(out). Its function is as follows. NDH-1 shuttles electrons from NADH, via FMN and iron-sulfur (Fe-S) centers, to quinones in the respiratory chain. The immediate electron acceptor for the enzyme in this species is believed to be ubiquinone. Couples the redox reaction to proton translocation (for every two electrons transferred, four hydrogen ions are translocated across the cytoplasmic membrane), and thus conserves the redox energy in a proton gradient. This subunit may bind ubiquinone. This chain is NADH-quinone oxidoreductase subunit H, found in Leptospira interrogans serogroup Icterohaemorrhagiae serovar copenhageni (strain Fiocruz L1-130).